The chain runs to 241 residues: Ubiquinone biosynthesis O-methyltransferase (241 aa).

S-adenosyl-L-methionine-binding residues include Arg-46, Gly-66, Asp-87, and Met-131.

Belongs to the methyltransferase superfamily. UbiG/COQ3 family.

The catalysed reaction is a 3-demethylubiquinol + S-adenosyl-L-methionine = a ubiquinol + S-adenosyl-L-homocysteine + H(+). It catalyses the reaction a 3-(all-trans-polyprenyl)benzene-1,2-diol + S-adenosyl-L-methionine = a 2-methoxy-6-(all-trans-polyprenyl)phenol + S-adenosyl-L-homocysteine + H(+). It participates in cofactor biosynthesis; ubiquinone biosynthesis. Its function is as follows. O-methyltransferase that catalyzes the 2 O-methylation steps in the ubiquinone biosynthetic pathway. The polypeptide is Ubiquinone biosynthesis O-methyltransferase (Bordetella bronchiseptica (strain ATCC BAA-588 / NCTC 13252 / RB50) (Alcaligenes bronchisepticus)).